The following is a 372-amino-acid chain: Protein phosphatase Mn(2+)-dependent 1K (372 aa).

The transit peptide at 1-29 (MLSTAFITLVRSGRNQVKKRVLLSSILLQ) directs the protein to the mitochondrion. Residues 46–61 (RCSRFDPDGSGQPATW) are critical for association with the BCKDH complex. The PPM-type phosphatase domain maps to 94–346 (NVGCASLIGK…DNSTAVVVPF (253 aa)). Mn(2+)-binding residues include aspartate 127 and glycine 128. Serine 248 carries the phosphoserine modification. Mn(2+) is bound by residues aspartate 298 and aspartate 337.

It belongs to the PP2C family. In terms of assembly, interacts with E1 and E2 components of the branched-chain alpha-ketoacid dehydrogenase (BCKDH) complex. Interacts with both BCKDHA and BCKDHB chains of the E1 subunit. Interacts with the 24-meric DBT/E2 core of the BCKD complex with a 1:1 stoichiometry; the N-terminal region (residues 49-61) of PPM1K and C-terminal linker of the lipoyl domain of DBT/E2 (residues 145-160) are critical for this interaction whereas the lipoyl prosthetic group is dispensable. Competes with BCKDK for binding to DBT/E2; this interaction is modulated by branched-chain alpha-keto acids (BCKAs). At steady state, BCKDH holoenzyme preferentially binds BCKDK and BCKDHA/E1 is phosphorylated. In response to high levels of BCKAs, BCKDK is replaced by PPM1K leading to BCKDHA/E1 dephosphorylation. Requires Mn(2+) as cofactor.

The protein resides in the mitochondrion matrix. The catalysed reaction is O-phospho-L-seryl-[3-methyl-2-oxobutanoate dehydrogenase] + H2O = L-seryl-[3-methyl-2-oxobutanoate dehydrogenase] + phosphate. It catalyses the reaction O-phospho-L-seryl-[protein] + H2O = L-seryl-[protein] + phosphate. It participates in protein modification. Its function is as follows. Serine/threonine-protein phosphatase component of macronutrients metabolism. Together with BCKDK serves as a metabolic regulatory node that coordinates branched-chain amino acids (BCAAs) and protein synthesis with glucose and lipid metabolism via two distinct phosphoprotein targets: BCKDHA/E1a subunit of the branched-chain alpha-ketoacid dehydrogenase (BCKDH) complex and ACLY, a lipogenic enzyme of Krebs cycle. At high levels of branched-chain ketoacids (BCKAs), dephosphorylates and activates mitochondrial BCKDH complex, a multisubunit complex consisting of three components, heterotetrameric E1 composed of BCKDHA and BCKDHB chains, 24-meric E2 core composed of DBT and homodimeric E3 composed of DLD, each involved in different steps of BCAA catabolism. Tightly associates with the E2 subunit of BCKDH complex and dephosphorylates Ser-333 of BCKDHA chain of the E1 subunit likely through on-off binding to individual E2 subunits of the 24-meric E2 core to increase the efficiency of the dephosphorylation reaction. Appears to dephosphorylate and inactivate cytosolic ACLY in response to changes of cellular carbohydrate abundance. Overnutrition and in particular high-fructose diet, activates MLXIPL/ChREBP leading to increased BCKDK to PPM1K ratio, phosphorylation of ACLY on Ser-454 and activation of its enzymatic activity that ultimately results in the generation of acetyl-CoA and malonyl-CoA immediate substrates of de novo lipogenesis. Recognizes phosphosites having SxS or RxxS motifs and strictly depends on Mn(2+) ions for the phosphatase activity. Regulates Ca(2+)-induced opening of mitochondrial transition pore and apoptotic cell death. The protein is Protein phosphatase Mn(2+)-dependent 1K (Ppm1k) of Rattus norvegicus (Rat).